The chain runs to 349 residues: Anthranilate phosphoribosyltransferase (349 aa).

5-phospho-alpha-D-ribose 1-diphosphate-binding positions include G82, G85–D86, N92–T95, K110–G118, and S122. G82 serves as a coordination point for anthranilate. Residue S94 participates in Mg(2+) binding. Anthranilate is bound at residue N113. Residue R168 participates in anthranilate binding. D227 and E228 together coordinate Mg(2+).

The protein belongs to the anthranilate phosphoribosyltransferase family. Homodimer. The cofactor is Mg(2+).

The catalysed reaction is N-(5-phospho-beta-D-ribosyl)anthranilate + diphosphate = 5-phospho-alpha-D-ribose 1-diphosphate + anthranilate. It participates in amino-acid biosynthesis; L-tryptophan biosynthesis; L-tryptophan from chorismate: step 2/5. Functionally, catalyzes the transfer of the phosphoribosyl group of 5-phosphorylribose-1-pyrophosphate (PRPP) to anthranilate to yield N-(5'-phosphoribosyl)-anthranilate (PRA). The protein is Anthranilate phosphoribosyltransferase of Pseudomonas putida (strain ATCC 47054 / DSM 6125 / CFBP 8728 / NCIMB 11950 / KT2440).